A 746-amino-acid polypeptide reads, in one-letter code: Eukaryotic translation initiation factor 3 subunit B (746 aa).

Residues 1-11 (MAPSYEHLREA) are compositionally biased toward basic and acidic residues. The segment at 1–20 (MAPSYEHLREADLDEDEFDE) is disordered. Residues 42-128 (TFVVIDGLPE…HTLRVNKLMD (87 aa)) enclose the RRM domain. 7 WD repeats span residues 195–234 (DRPNWTESFVQWSPLGTYLLSMHMQGVQLWGGPKWDRLGR), 247–294 (PQEN…RSFA), 307–346 (PRKHPWPAFKWSSDDKYVARLTQGQSISVYELPRMNLLDK), 349–386 (IKVEGVQDFEWAPSRPQRDGVKTYEQMFCYWTPEIGSN), 458–500 (TIKD…FFCP), 517–560 (LDKR…EKPE), and 575–620 (ADHY…LREE).

Belongs to the eIF-3 subunit B family. In terms of assembly, component of the eukaryotic translation initiation factor 3 (eIF-3) complex.

It localises to the cytoplasm. RNA-binding component of the eukaryotic translation initiation factor 3 (eIF-3) complex, which is involved in protein synthesis of a specialized repertoire of mRNAs and, together with other initiation factors, stimulates binding of mRNA and methionyl-tRNAi to the 40S ribosome. The eIF-3 complex specifically targets and initiates translation of a subset of mRNAs involved in cell proliferation. In Pyricularia oryzae (strain 70-15 / ATCC MYA-4617 / FGSC 8958) (Rice blast fungus), this protein is Eukaryotic translation initiation factor 3 subunit B.